We begin with the raw amino-acid sequence, 380 residues long: F-box/kelch-repeat protein At3g18720 (380 aa).

An F-box domain is found at 47-94 (LWDKQIPTDLLQEILSRLGLKANIHASLVCKTWLKEAVSVRKFQSRPW). Kelch repeat units follow at residues 190-233 (CVIS…INRC) and 234-279 (IFSN…LVRQ).

In Arabidopsis thaliana (Mouse-ear cress), this protein is F-box/kelch-repeat protein At3g18720.